Reading from the N-terminus, the 235-residue chain is tRNA (guanine-N(1)-)-methyltransferase (235 aa).

S-adenosyl-L-methionine is bound by residues Gly-114 and 134–139 (IGDYIL).

Belongs to the RNA methyltransferase TrmD family. As to quaternary structure, homodimer.

It is found in the cytoplasm. It catalyses the reaction guanosine(37) in tRNA + S-adenosyl-L-methionine = N(1)-methylguanosine(37) in tRNA + S-adenosyl-L-homocysteine + H(+). Specifically methylates guanosine-37 in various tRNAs. The chain is tRNA (guanine-N(1)-)-methyltransferase from Ehrlichia ruminantium (strain Gardel).